A 452-amino-acid chain; its full sequence is tRNA modification GTPase MnmE (452 aa).

(6S)-5-formyl-5,6,7,8-tetrahydrofolate contacts are provided by R28, E85, and K124. The TrmE-type G domain maps to 220–378 (GMNVVLVGRP…LRTELLRAAG (159 aa)). N230 is a K(+) binding site. GTP-binding positions include 230–235 (NVGKSS), 249–255 (TDVAGTT), 274–277 (DTAG), and 359–361 (SAR). S234 lines the Mg(2+) pocket. The K(+) site is built by T249, V251, and T254. T255 is a binding site for Mg(2+). (6S)-5-formyl-5,6,7,8-tetrahydrofolate is bound at residue K452.

The protein belongs to the TRAFAC class TrmE-Era-EngA-EngB-Septin-like GTPase superfamily. TrmE GTPase family. In terms of assembly, homodimer. Heterotetramer of two MnmE and two MnmG subunits. K(+) is required as a cofactor.

The protein localises to the cytoplasm. Functionally, exhibits a very high intrinsic GTPase hydrolysis rate. Involved in the addition of a carboxymethylaminomethyl (cmnm) group at the wobble position (U34) of certain tRNAs, forming tRNA-cmnm(5)s(2)U34. In Azoarcus sp. (strain BH72), this protein is tRNA modification GTPase MnmE.